The sequence spans 247 residues: GTP cyclohydrolase 1 type 2 homolog (247 aa).

A divalent metal cation contacts are provided by histidine 63, histidine 64, aspartate 101, histidine 215, and glutamate 219.

Belongs to the GTP cyclohydrolase I type 2/NIF3 family. In terms of assembly, toroid-shaped homohexamer. In the hexamer, 3 dimers assemble to form a ring-like structure surrounding a central hole.

In terms of biological role, provides significant protection from radiation damage and may be involved in the degradation of radiation-damaged nucleotides. The protein is GTP cyclohydrolase 1 type 2 homolog (ybgI) of Escherichia coli O157:H7.